The sequence spans 238 residues: CS1 fimbrial subunit B (238 aa).

An N-terminal signal peptide occupies residues 1 to 17 (MRKLFLSLLMIPFVAKA).

The protein localises to the fimbrium. Functionally, might function as a shuttle protein in the transport of fimbria through the periplasmic space or might function as an adhesin. In Escherichia coli, this protein is CS1 fimbrial subunit B (csoB).